The chain runs to 1136 residues: Nucleoporin nup120 (1136 aa).

Component of the npc107-120 complex which consists of nup85, nup107, nup120, nup131, nup132 and seh1. Interacts with nup107.

It localises to the nucleus. Functionally, functions as a component of the nuclear pore complex (NPC). NPC components, collectively referred to as nucleoporins (NUPs), can play the role of both NPC structural components and of docking or interaction partners for transiently associated nuclear transport factors. Active directional transport is assured by both, a Phe-Gly (FG) repeat affinity gradient for these transport factors across the NPC and a transport cofactor concentration gradient across the nuclear envelope. The protein is Nucleoporin nup120 (nup120) of Schizosaccharomyces pombe (strain 972 / ATCC 24843) (Fission yeast).